A 539-amino-acid chain; its full sequence is Gamma-2-syntrophin (539 aa).

The PDZ domain maps to 73-156; it reads TVTLRRQPVG…EVTITVEYLR (84 aa). Low complexity-rich tracts occupy residues 168 to 183 and 194 to 205; these read SPGP…SSPL and SSTTAPSSPSSP. Positions 168–209 are disordered; it reads SPGPSSDHSSGASSPLFDSGLHLNGNSSTTAPSSPSSPIAKD. A PH domain is found at 296–421; the sequence is QVVHMGWVNE…WEKSFQRATF (126 aa).

The protein belongs to the syntrophin family. As to quaternary structure, interacts with the dystrophin protein DMD and related proteins DTNA and DTNB. In terms of tissue distribution, widely expressed. Strong expression in brain and testis. In CNS, it is expressed in the perikaryon and proximal portion of the neuronal processes. Strong expression in the hippocampus, neuron-rich dendate granule cells, and pyramidal cell layers. Highly expressed in neurons of the cerebral cortex. Also expressed in the cerebellar cortex, deep cerebellar nuclei, thalamus, and basal ganglia.

The protein resides in the cell membrane. The protein localises to the sarcolemma. Its subcellular location is the cytoplasm. It is found in the cytoskeleton. In terms of biological role, adapter protein that binds to and probably organizes the subcellular localization of a variety of proteins. May link various receptors to the actin cytoskeleton and the dystrophin glycoprotein complex. The protein is Gamma-2-syntrophin (SNTG2) of Homo sapiens (Human).